Reading from the N-terminus, the 539-residue chain is Glycerophosphoinositol inositolphosphodiesterase GDPD2 (539 aa).

Residues 1-40 (MADSPGCCSIWARCLHCLYSCHWRKYPKQKMQTSKCDCIW) are Cytoplasmic-facing. The chain crosses the membrane as a helical span at residues 41-61 (FGLLFLTFLLSLGWLYIGLIL). At 62–83 (LNDLHNFNEFLFRHWGHWMDWS) the chain is on the extracellular side. Residues 84–104 (LIVLLVVSLLVTYASLLLLLG) form a helical membrane-spanning segment. The Cytoplasmic portion of the chain corresponds to 105–121 (LLLQLCGQPLHLHSLHK). Residues 122–142 (VLLLLIVLLVAAGLVGLDIQW) traverse the membrane as a helical segment. Over 143-154 (RQEWHSLRLSLQ) the chain is Extracellular. A helical membrane pass occupies residues 155–175 (ATAPFLHIGAVAGITLLAWPV). Over 176–189 (ADTFYRIHPRGPKV) the chain is Cytoplasmic. The chain crosses the membrane as a helical span at residues 190-210 (LLLLLFFGVTLVIYLMPLLFI). Residues 211-491 (SSPCIMKLRD…PLWLLPPQKY (281 aa)) lie on the Extracellular side of the membrane. The region spanning 225–480 (PGLVGHRGAP…NACQLLQQMQ (256 aa)) is the GP-PDE domain. 3 residues coordinate a divalent metal cation: E257, D259, and H272. N-linked (GlcNAc...) asparagine glycosylation is present at N333. Residues 492–512 (LMIWVITDCASILLLLSIFLL) traverse the membrane as a helical segment. Topologically, residues 513 to 539 (RGGCAKRNRTGLETAVLLTKINNFASE) are cytoplasmic.

It belongs to the glycerophosphoryl diester phosphodiesterase family. Ca(2+) is required as a cofactor. In terms of tissue distribution, detected in spleen, femur and calvaria.

Its subcellular location is the cell membrane. The protein resides in the cytoplasm. It localises to the cytoskeleton. It carries out the reaction sn-glycero-3-phospho-1D-myo-inositol + H2O = 1D-myo-inositol 1-phosphate + glycerol + H(+). Functionally, has glycerophosphoinositol inositolphosphodiesterase activity and specifically hydrolyzes glycerophosphoinositol, with no activity for other substrates such as glycerophosphoinositol 4-phosphate, glycerophosphocholine, glycerophosphoethanolamine, and glycerophosphoserine. Accelerates the program of osteoblast differentiation and growth. May play a role in remodeling of the actin cytoskeleton. This is Glycerophosphoinositol inositolphosphodiesterase GDPD2 (Gdpd2) from Mus musculus (Mouse).